The sequence spans 313 residues: NADH-ubiquinone oxidoreductase chain 1 (313 aa).

The next 10 helical transmembrane spans lie at 6–26 (IIII…FVSL), 31–51 (ILAL…ILTP), 62–82 (FIIF…IITA), 84–104 (CIFL…DTGF), 109–129 (MLCV…CFLF), 142–162 (MFFS…IYSL), 183–203 (FYIA…LDGL), 216–235 (LVAG…YSVL), 250–270 (LCFG…FGFF), and 286–306 (AFIL…LFTT).

Belongs to the complex I subunit 1 family.

Its subcellular location is the mitochondrion inner membrane. The enzyme catalyses a ubiquinone + NADH + 5 H(+)(in) = a ubiquinol + NAD(+) + 4 H(+)(out). In terms of biological role, core subunit of the mitochondrial membrane respiratory chain NADH dehydrogenase (Complex I) that is believed to belong to the minimal assembly required for catalysis. Complex I functions in the transfer of electrons from NADH to the respiratory chain. The immediate electron acceptor for the enzyme is believed to be ubiquinone. The chain is NADH-ubiquinone oxidoreductase chain 1 (ND1) from Leishmania tarentolae (Sauroleishmania tarentolae).